Reading from the N-terminus, the 223-residue chain is Ubiquitin carboxyl-terminal hydrolase isozyme L1 (223 aa).

At methionine 1 the chain carries N-acetylmethionine. The region spanning 2–221 is the UCH catalytic domain; sequence QLKPMEINPE…VRFSAVALCK (220 aa). Residues 5–10 form an interaction with ubiquitin region; sequence PMEINP. The Nucleophile role is filled by cysteine 90. Serine 125 bears the Phosphoserine mark. The Proton donor role is filled by histidine 161. The interaction with ubiquitin stretch occupies residues 211–216; sequence EVRFSA. The S-farnesyl cysteine moiety is linked to residue cysteine 220. Positions 221 to 223 are cleaved as a propeptide — removed in mature form; that stretch reads KAA.

It belongs to the peptidase C12 family. In terms of assembly, monomer. Homodimer. Interacts with COPS5 and SNCA. In terms of processing, O-glycosylated. In terms of tissue distribution, expressed in brain, where it is found in neurons but not in oligodendrocytes or astrocytes. Found in the ganglion cell layer and the inner nuclear layer of the retina (at protein level). Expressed in brain and testis. In the brain, expression is at its lowest in replaceable neurons of hippocampus and olfactory bulb. Highly expressed in senescent pituitary. In skeletal muscle, primarily expressed in oxidative muscle fibers.

The protein localises to the cytoplasm. It localises to the endoplasmic reticulum membrane. It carries out the reaction Thiol-dependent hydrolysis of ester, thioester, amide, peptide and isopeptide bonds formed by the C-terminal Gly of ubiquitin (a 76-residue protein attached to proteins as an intracellular targeting signal).. In terms of biological role, deubiquitinase that plays a role in the regulation of several processes such as maintenance of synaptic function, cardiac function, inflammatory response or osteoclastogenesis. Abrogates the ubiquitination of multiple proteins including WWTR1/TAZ, EGFR, HIF1A and beta-site amyloid precursor protein cleaving enzyme 1/BACE1. In addition, recognizes and hydrolyzes a peptide bond at the C-terminal glycine of ubiquitin to maintain a stable pool of monoubiquitin that is a key requirement for the ubiquitin-proteasome and the autophagy-lysosome pathways. Regulates amyloid precursor protein/APP processing by promoting BACE1 degradation resulting in decreased amyloid beta production. Plays a role in the immune response by regulating the ability of MHC I molecules to reach cross-presentation compartments competent for generating Ag-MHC I complexes. Mediates the 'Lys-48'-linked deubiquitination of the transcriptional coactivator WWTR1/TAZ leading to its stabilization and inhibition of osteoclastogenesis. Deubiquitinates and stabilizes epidermal growth factor receptor EGFR to prevent its degradation and to activate its downstream mediators. Modulates oxidative activity in skeletal muscle by regulating key mitochondrial oxidative proteins. Enhances the activity of hypoxia-inducible factor 1-alpha/HIF1A by abrogateing its VHL E3 ligase-mediated ubiquitination and consequently inhibiting its degradation. This is Ubiquitin carboxyl-terminal hydrolase isozyme L1 (Uchl1) from Mus musculus (Mouse).